Reading from the N-terminus, the 690-residue chain is Glycine--tRNA ligase beta subunit (690 aa).

This sequence belongs to the class-II aminoacyl-tRNA synthetase family. As to quaternary structure, tetramer of two alpha and two beta subunits.

It is found in the cytoplasm. It carries out the reaction tRNA(Gly) + glycine + ATP = glycyl-tRNA(Gly) + AMP + diphosphate. The sequence is that of Glycine--tRNA ligase beta subunit from Desulfatibacillum aliphaticivorans.